The following is a 365-amino-acid chain: tRNA N6-adenosine threonylcarbamoyltransferase (365 aa).

Fe cation-binding residues include H119 and H123. Substrate contacts are provided by residues 141–145 (LVSGG), D174, G187, and N289. D317 is a binding site for Fe cation. A disordered region spans residues 341–365 (SARPRWPLDKTSPALIGSGKKGAKA).

It belongs to the KAE1 / TsaD family. Fe(2+) is required as a cofactor.

It localises to the cytoplasm. It carries out the reaction L-threonylcarbamoyladenylate + adenosine(37) in tRNA = N(6)-L-threonylcarbamoyladenosine(37) in tRNA + AMP + H(+). Its function is as follows. Required for the formation of a threonylcarbamoyl group on adenosine at position 37 (t(6)A37) in tRNAs that read codons beginning with adenine. Is involved in the transfer of the threonylcarbamoyl moiety of threonylcarbamoyl-AMP (TC-AMP) to the N6 group of A37, together with TsaE and TsaB. TsaD likely plays a direct catalytic role in this reaction. This is tRNA N6-adenosine threonylcarbamoyltransferase from Ruegeria sp. (strain TM1040) (Silicibacter sp.).